Consider the following 117-residue polypeptide: Putative phosphotransferase enzyme IIB component MG129 (117 aa).

The helical transmembrane segment at 1 to 21 (MKWLLWLGYIFSFGLLYLWIV) threads the bilayer. A PTS EIIB type-1 domain is found at 42-117 (PFKVKDFVSA…ELKKKIEDEQ (76 aa)).

It localises to the membrane. In terms of biological role, the phosphoenolpyruvate-dependent sugar phosphotransferase system (PTS), a major carbohydrate active -transport system, catalyzes the phosphorylation of incoming sugar substrates concomitant with their translocation across the cell membrane. The polypeptide is Putative phosphotransferase enzyme IIB component MG129 (Mycoplasma genitalium (strain ATCC 33530 / DSM 19775 / NCTC 10195 / G37) (Mycoplasmoides genitalium)).